The sequence spans 32 residues: Cytochrome b6-f complex subunit 7 (32 aa).

The chain crosses the membrane as a helical span at residues 9–27 (AAVFWVLIPVGLAGGALLL).

It belongs to the PetM family. The 4 large subunits of the cytochrome b6-f complex are cytochrome b6, subunit IV (17 kDa polypeptide, PetD), cytochrome f and the Rieske protein, while the 4 small subunits are PetG, PetL, PetM and PetN. The complex functions as a dimer.

It localises to the cellular thylakoid membrane. Component of the cytochrome b6-f complex, which mediates electron transfer between photosystem II (PSII) and photosystem I (PSI), cyclic electron flow around PSI, and state transitions. This chain is Cytochrome b6-f complex subunit 7, found in Prochlorococcus marinus (strain MIT 9303).